A 154-amino-acid chain; its full sequence is Protein X (154 aa).

The segment at 68–117 (PCALRFTSARRMETTVNAHQFLPKVLYKRTLGLSVMSTTDLEAYFKDCLF) is mitochondrial targeting sequence.

The protein belongs to the orthohepadnavirus protein X family. As to quaternary structure, may form homodimer. May interact with host CEBPA, CFLAR, CREB1, DDB1, E4F1, HBXIP, HSPD1/HSP60, NFKBIA, POLR2E and SMAD4. Interacts with host SMC5-SMC6 complex and induces its degradation. Interacts with host TRPC4AP; leading to prevent ubiquitination of TRPC4AP. Interacts with host PLSCR1; this interaction promotes ubiquitination and degradation of HBx and impairs HBx-mediated cell proliferation. A fraction may be phosphorylated in insect cells and HepG2 cells, a human hepatoblastoma cell line. Phosphorylated in vitro by host protein kinase C or mitogen-activated protein kinase. N-acetylated in insect cells.

It is found in the host cytoplasm. It localises to the host nucleus. Its subcellular location is the host mitochondrion. Functionally, multifunctional protein that plays a role in silencing host antiviral defenses and promoting viral transcription. Does not seem to be essential for HBV infection. May be directly involved in development of cirrhosis and liver cancer (hepatocellular carcinoma). Most of cytosolic activities involve modulation of cytosolic calcium. The effect on apoptosis is controversial depending on the cell types in which the studies have been conducted. May induce apoptosis by localizing in mitochondria and causing loss of mitochondrial membrane potential. May also modulate apoptosis by binding host CFLAR, a key regulator of the death-inducing signaling complex (DISC). Promotes viral transcription by using the host E3 ubiquitin ligase DDB1 to target the SMC5-SMC6 complex to proteasomal degradation. This host complex would otherwise bind to viral episomal DNA, and prevents its transcription. Moderately stimulates transcription of many different viral and cellular transcription elements. Promoters and enhancers stimulated by HBx contain DNA binding sites for NF-kappa-B, AP-1, AP-2, c-EBP, ATF/CREB, or the calcium-activated factor NF-AT. The protein is Protein X of Homo sapiens (Human).